The primary structure comprises 617 residues: UvrABC system protein C (617 aa).

The region spanning 12-91 is the GIY-YIG domain; that stretch reads EKPGVYLMKD…IKKYKPKYNV (80 aa). One can recognise a UVR domain in the interval 203–238; the sequence is EWLVEKLKEEMQKAADELRFEEAARLRDQIFAIEKI.

The protein belongs to the UvrC family. As to quaternary structure, interacts with UvrB in an incision complex.

The protein resides in the cytoplasm. Its function is as follows. The UvrABC repair system catalyzes the recognition and processing of DNA lesions. UvrC both incises the 5' and 3' sides of the lesion. The N-terminal half is responsible for the 3' incision and the C-terminal half is responsible for the 5' incision. This is UvrABC system protein C from Caldanaerobacter subterraneus subsp. tengcongensis (strain DSM 15242 / JCM 11007 / NBRC 100824 / MB4) (Thermoanaerobacter tengcongensis).